The following is a 421-amino-acid chain: Core-capsid bridging protein (421 aa).

The protein belongs to the adenoviridae core-capsid bridging protein family. In terms of assembly, monomer. Homodimer. Exists in equilibrium between monomers and dimers in solution. Interacts with the histone-like nucleoprotein; this interactions bridge the virus core to the capsid. Interacts with core protein X; this interactions bridge the virus core to the capsid. Interacts with the endosome lysis protein VI; this interactions bridge the virus core to the capsid. Interacts with the peripentonal hexons. Interacts with host NPM1; this interaction might play a role in virus assembly.

It is found in the virion. It localises to the host nucleus. The protein resides in the host nucleolus. In terms of biological role, associates loosely with the viral DNA to form an outer shell around the nucleoprotein-DNA complex and links it with the capsid by binding the endosome lysis protein. Dissociates from the viral genome during entry. Might be involved in nuclear capsid assembly of the viral particles through its association with NPM1/nucleophosmin. This is Core-capsid bridging protein from Canine adenovirus serotype 1 (strain RI261) (CAdV-1).